Reading from the N-terminus, the 436-residue chain is Phosphomethylpyrimidine synthase (436 aa).

Substrate contacts are provided by residues N69, M98, Y127, H163, S185–G187, D226–R229, and E265. H269 contributes to the Zn(2+) binding site. Residue Y292 participates in substrate binding. H333 provides a ligand contact to Zn(2+). 3 residues coordinate [4Fe-4S] cluster: C409, C412, and C416.

This sequence belongs to the ThiC family. The cofactor is [4Fe-4S] cluster.

It carries out the reaction 5-amino-1-(5-phospho-beta-D-ribosyl)imidazole + S-adenosyl-L-methionine = 4-amino-2-methyl-5-(phosphooxymethyl)pyrimidine + CO + 5'-deoxyadenosine + formate + L-methionine + 3 H(+). Its pathway is cofactor biosynthesis; thiamine diphosphate biosynthesis. In terms of biological role, catalyzes the synthesis of the hydroxymethylpyrimidine phosphate (HMP-P) moiety of thiamine from aminoimidazole ribotide (AIR) in a radical S-adenosyl-L-methionine (SAM)-dependent reaction. The polypeptide is Phosphomethylpyrimidine synthase (Clostridium acetobutylicum (strain ATCC 824 / DSM 792 / JCM 1419 / IAM 19013 / LMG 5710 / NBRC 13948 / NRRL B-527 / VKM B-1787 / 2291 / W)).